Here is a 233-residue protein sequence, read N- to C-terminus: Snake venom serine protease ussurase (233 aa).

The 224-residue stretch at 1-224 (VIGGVECNIN…YTDWIQSIIS (224 aa)) folds into the Peptidase S1 domain. Intrachain disulfides connect C7/C138, C25/C41, C73/C231, C117/C185, C149/C164, and C175/C200. H40 (charge relay system) is an active-site residue. N54 is a glycosylation site (N-linked (GlcNAc...) asparagine). Catalysis depends on D85, which acts as the Charge relay system. S179 functions as the Charge relay system in the catalytic mechanism.

The protein belongs to the peptidase S1 family. Snake venom subfamily. In terms of assembly, monomer. In terms of tissue distribution, expressed by the venom gland.

The protein localises to the secreted. Functionally, snake venom serine protease that may act in the hemostasis system of the prey. The sequence is that of Snake venom serine protease ussurase from Gloydius ussuriensis (Ussuri mamushi).